A 580-amino-acid chain; its full sequence is Viral transcription factor IE2 (580 aa).

Residues 1–11 show a composition bias toward basic and acidic residues; that stretch reads MESSAKRKMDP. Disordered stretches follow at residues 1–30 and 99–161; these read MESS…TPVT and DSSS…VIIK. Positions 99 to 133 are enriched in polar residues; it reads DSSSTGPTLTTHSCSVSSAPLNKPTPTSVAVTNTP. Glycyl lysine isopeptide (Lys-Gly) (interchain with G-Cter in SUMO) cross-links involve residues lysine 175 and lysine 180. The SUMO-interacting motif 1/SIM1 signature appears at 199-202; the sequence is CIVI. The interval 200 to 208 is non-covalent SUMO1 binding region (SIM); the sequence is IVISDSEEE. 2 positions are modified to phosphoserine: serine 203 and serine 205. The segment at 206–336 is disordered; that stretch reads EEEQGEEVET…SKRISELDNE (131 aa). Low complexity-rich tracts occupy residues 216–236, 259–271, and 302–317; these read RGAT…TSPT, SSSS…SASD, and AASS…SSGG. An SUMO-interacting motif 1/SIM2 motif is present at residues 410-413; sequence IQII. Positions 501-504 match the SUMO-interacting motif 1/SIM3 motif; sequence VDLL.

This sequence belongs to the HHV-5 IE2 protein family. In terms of assembly, interacts with host SUMO-modified form of TATA-binding protein (TBP)-associated factor 12/TAF12 in a SIM-dependent manner; this interaction increases the transactivation activity of IE2. Interacts with host CHAF1A. Interacts with several components of the host transcriptional machinery including TBP, TF2B and CREB1. Interacts with host DNA replication licensing factor MCM3. Interacts with host PLSCR1; this interaction inhibits IE2 transactivating activity. In terms of processing, phosphorylated by host CK2 at Ser-203 and Ser-205; leading to enhanced SUMOylation. SUMOylated; SUMOylation is enhanced when IE2 is phosphorylated by host CK2. The sumoylation is necessary for efficient replication of the virus and thus for the function of this viral transcription factor.

Its subcellular location is the host nucleus. Its function is as follows. Stimulates viral early and late gene expression and thus play a crucial role in the regulation of productive infection. Selectively drives host RNA Pol II transcription initiation at a subset of viral early-late and late promoters without substantially affecting Pol II transcription of expressed host genes. Mechanistically, forms a repressive complex at the major immediate-early promoter region involving direct association with host nucleosomes and TBP. Concerning activation, stimulates transcription by binding nearby, but not within, core promoter regions. In addition, activates quiescent cells to reenter the cell cycle and up-regulates several E2F-responsive genes, which are responsible for pushing the cell into S phase. In S-phase, inhibits cellular DNA synthesis and blocks further cell cycle progression. This is Viral transcription factor IE2 (UL122) from Homo sapiens (Human).